The following is a 318-amino-acid chain: Protoheme IX farnesyltransferase (318 aa).

9 consecutive transmembrane segments (helical) span residues 29–49, 51–71, 102–122, 123–143, 151–171, 179–199, 219–239, 241–261, and 280–300; these read IIPLLLITTAGSMWIAAQGQV, PVLLLVTMAGGTLAAASAQTI, LIFAIALAVLSFTLLTVFANL, LAASLALSGIIFYVLIYTHWL, IVIGGAAGAIPALVGWAAVTG, LIFAIVFLWTPPHFWALALMI, ATVKQIWYYTLITVAATLLLV, PLHASGIVYAAIAISLGAVFI, and LFLYSISYMMLLCLGMVVDSL.

This sequence belongs to the UbiA prenyltransferase family. Protoheme IX farnesyltransferase subfamily.

It is found in the cell inner membrane. It catalyses the reaction heme b + (2E,6E)-farnesyl diphosphate + H2O = Fe(II)-heme o + diphosphate. It participates in porphyrin-containing compound metabolism; heme O biosynthesis; heme O from protoheme: step 1/1. Functionally, converts heme B (protoheme IX) to heme O by substitution of the vinyl group on carbon 2 of heme B porphyrin ring with a hydroxyethyl farnesyl side group. This chain is Protoheme IX farnesyltransferase, found in Nostoc sp. (strain PCC 7120 / SAG 25.82 / UTEX 2576).